The sequence spans 546 residues: Probable protein kinase UbiB (546 aa).

Residues 124–502 form the Protein kinase domain; the sequence is DFDIQPLASA…HVRQSQSRYL (379 aa). Residues 130-138 and lysine 153 contribute to the ATP site; that span reads LASASIAQV. The active-site Proton acceptor is the aspartate 288. Transmembrane regions (helical) follow at residues 501 to 521 and 522 to 542; these read YLLG…VNRP and EWGL…LVGW.

The protein belongs to the ABC1 family. UbiB subfamily.

The protein resides in the cell inner membrane. The protein operates within cofactor biosynthesis; ubiquinone biosynthesis [regulation]. Is probably a protein kinase regulator of UbiI activity which is involved in aerobic coenzyme Q (ubiquinone) biosynthesis. This Salmonella enteritidis PT4 (strain P125109) protein is Probable protein kinase UbiB.